The following is a 197-amino-acid chain: Ribonuclease HII (197 aa).

In terms of domain architecture, RNase H type-2 spans 11 to 197 (NLIAGVDEVG…FAPVRKILGL (187 aa)). Residues D17, E18, and D109 each coordinate a divalent metal cation.

It belongs to the RNase HII family. Requires Mn(2+) as cofactor. Mg(2+) serves as cofactor.

Its subcellular location is the cytoplasm. The catalysed reaction is Endonucleolytic cleavage to 5'-phosphomonoester.. Its function is as follows. Endonuclease that specifically degrades the RNA of RNA-DNA hybrids. In Haemophilus ducreyi (strain 35000HP / ATCC 700724), this protein is Ribonuclease HII.